Consider the following 375-residue polypeptide: Succinyl-diaminopimelate desuccinylase (375 aa).

Position 66 (His66) interacts with Zn(2+). Residue Asp68 is part of the active site. Residue Asp99 participates in Zn(2+) binding. Glu133 (proton acceptor) is an active-site residue. The Zn(2+) site is built by Glu134, Glu162, and His348.

Belongs to the peptidase M20A family. DapE subfamily. In terms of assembly, homodimer. Zn(2+) is required as a cofactor. Co(2+) serves as cofactor.

The enzyme catalyses N-succinyl-(2S,6S)-2,6-diaminopimelate + H2O = (2S,6S)-2,6-diaminopimelate + succinate. It participates in amino-acid biosynthesis; L-lysine biosynthesis via DAP pathway; LL-2,6-diaminopimelate from (S)-tetrahydrodipicolinate (succinylase route): step 3/3. Functionally, catalyzes the hydrolysis of N-succinyl-L,L-diaminopimelic acid (SDAP), forming succinate and LL-2,6-diaminopimelate (DAP), an intermediate involved in the bacterial biosynthesis of lysine and meso-diaminopimelic acid, an essential component of bacterial cell walls. This is Succinyl-diaminopimelate desuccinylase from Escherichia coli O6:K15:H31 (strain 536 / UPEC).